Reading from the N-terminus, the 404-residue chain is Acetate kinase (404 aa).

Asn7 lines the Mg(2+) pocket. Lys14 lines the ATP pocket. Arg98 serves as a coordination point for substrate. The active-site Proton donor/acceptor is the Asp155. Residues 214 to 218 (HLGNG), 289 to 291 (DLR), and 337 to 341 (GIGEN) contribute to the ATP site. Glu390 provides a ligand contact to Mg(2+).

This sequence belongs to the acetokinase family. Homodimer. The cofactor is Mg(2+). It depends on Mn(2+) as a cofactor.

Its subcellular location is the cytoplasm. The catalysed reaction is acetate + ATP = acetyl phosphate + ADP. It participates in metabolic intermediate biosynthesis; acetyl-CoA biosynthesis; acetyl-CoA from acetate: step 1/2. Functionally, catalyzes the formation of acetyl phosphate from acetate and ATP. Can also catalyze the reverse reaction. The polypeptide is Acetate kinase (Rippkaea orientalis (strain PCC 8801 / RF-1) (Cyanothece sp. (strain PCC 8801))).